A 694-amino-acid polypeptide reads, in one-letter code: Elongation factor G (694 aa).

Residues 9-288 enclose the tr-type G domain; it reads SKIRNIGIMA…VIVKWLPSPK (280 aa). GTP is bound by residues 18–25, 82–86, and 136–139; these read AHIDAGKT, DTPGH, and NKMD.

The protein belongs to the TRAFAC class translation factor GTPase superfamily. Classic translation factor GTPase family. EF-G/EF-2 subfamily.

The protein resides in the cytoplasm. Catalyzes the GTP-dependent ribosomal translocation step during translation elongation. During this step, the ribosome changes from the pre-translocational (PRE) to the post-translocational (POST) state as the newly formed A-site-bound peptidyl-tRNA and P-site-bound deacylated tRNA move to the P and E sites, respectively. Catalyzes the coordinated movement of the two tRNA molecules, the mRNA and conformational changes in the ribosome. This Chlamydia felis (strain Fe/C-56) (Chlamydophila felis) protein is Elongation factor G.